The sequence spans 305 residues: tRNA dimethylallyltransferase (305 aa).

9–16 (GPTGAGKT) provides a ligand contact to ATP. Substrate is bound at residue 11–16 (TGAGKT). 2 interaction with substrate tRNA regions span residues 34–37 (DSRQ) and 158–162 (QRIVR).

It belongs to the IPP transferase family. As to quaternary structure, monomer. Mg(2+) serves as cofactor.

It catalyses the reaction adenosine(37) in tRNA + dimethylallyl diphosphate = N(6)-dimethylallyladenosine(37) in tRNA + diphosphate. In terms of biological role, catalyzes the transfer of a dimethylallyl group onto the adenine at position 37 in tRNAs that read codons beginning with uridine, leading to the formation of N6-(dimethylallyl)adenosine (i(6)A). The protein is tRNA dimethylallyltransferase of Oleidesulfovibrio alaskensis (strain ATCC BAA-1058 / DSM 17464 / G20) (Desulfovibrio alaskensis).